The primary structure comprises 606 residues: MCTIISVNHHHVAILSKPKVKLFHTKNKRSASINLPWSLSPSSSAASRPISCSISSKLYTISSAQEETRRSGNYHPSVWDFDFIQSLDTDHYKEEKQLEREEELIMEVKKLLGAKMEATKQLELIDDLQNLGLSYFFRDEIKNILNSIYKIFQNNNSTKVGDLHFTSLGFRLLRQHGFNVSQGVFDCFKNEHGSDFEKTLIGEDTKGVLQLYEASFLLREGEDTLEVARKFSTEFLEEKLKAGIDGDNLSSSIGHSLEIPLHWRIQRLEERWFLDAYSRRKDMNPIIFELAKLDFNIIQATQQEELKDLSRWWNDSSLPQKLPFVRDRLVESYYWALGLFEAHKFGYERKTAAKIITLITALDDVYDIYGTLDELQLFTHVIRRWDTESATQLPYYLQLFYFVLYNFVSEVAYHILKEEGFISIPFLHRAWVDLVEGYLQEAKWYYTKYTPTMEEYLNYASITIGAPAVISQIYFMLAKSKEKPVIESFYEYDEIIRLSGMLVRLPDDLGTLPFEMKRGDVAKSIQIYMKEQNATREEAEEHVRFMIREAWKEMNTTMAANSDLRGDVVMAAANLGRDAQFMYLDGDGNHSQLQHRIANLLFKPYV.

The transit peptide at 1-51 (MCTIISVNHHHVAILSKPKVKLFHTKNKRSASINLPWSLSPSSSAASRPIS) directs the protein to the chloroplast. Positions 326, 363, 367, 504, and 507 each coordinate (2E)-geranyl diphosphate. Residues D363 and D367 each coordinate Mg(2+). Residues 363 to 367 (DDVYD) carry the DDXXD motif motif. Residues D507, T511, and E515 each contribute to the Mg(2+) site.

This sequence belongs to the terpene synthase family. Tpsb subfamily. The cofactor is Mg(2+). Mn(2+) serves as cofactor.

It localises to the plastid. Its subcellular location is the chloroplast. It carries out the reaction (2E)-geranyl diphosphate + H2O = (R)-linalool + diphosphate. The protein operates within secondary metabolite biosynthesis; terpenoid biosynthesis. In terms of biological role, monoterpene synthase that catalyzes the formation of (3R)-linalool from geranyl diphosphate, but not from farnesyl diphosphate or geranylgeranyl diphosphate. The polypeptide is R-linalool synthase, chloroplastic (Mentha aquatica (Water mint)).